The chain runs to 322 residues: Lactamase-like protein nscB (322 aa).

His97, His99, Asp101, and His102 together coordinate Zn(2+). The Proton donor/acceptor role is filled by Asp101.

It belongs to the metallo-beta-lactamase superfamily. It depends on Zn(2+) as a cofactor.

It functions in the pathway secondary metabolite biosynthesis. Lactamase-like protein; part of the gene cluster that mediates the biosynthesis of neosartoricin B, a prenylated anthracenone that probably exhibits T-cell antiproliferative activity, suggestive of a physiological role as an immunosuppressive agent. The non-reducing polyketide synthase nscA probably synthesizes and cyclizes the decaketide backbone. The hydrolase nscB then mediates the product release through hydrolysis followed by spontaneous decarboxylation. The prenyltransferase nscD catalyzes the addition of the dimethylallyl group to the aromatic C5. The FAD-dependent monooxygenase nscC is then responsible for the stereospecific hydroxylation at C2. Neosartoricin B can be converted into two additional compounds neosartoricins C and D. Neosartoricin C is a spirocyclic compound that is cyclized through the attack of C3 hydroxyl on C14, followed by dehydration. On the other hand, neosartoricin D is a further cyclized compound in which attack of C2 on C14 in neosartoricin C results in the formation of the acetal-containing dioxabicyclo-octanone ring. Both of these compounds are novel and possibly represent related metabolites of the gene cluster. This chain is Lactamase-like protein nscB, found in Trichophyton rubrum (strain ATCC MYA-4607 / CBS 118892) (Athlete's foot fungus).